The sequence spans 376 residues: uncharacterized protein (376 aa).

The helical transmembrane segment at 24-44 (YLSIISIISVFLLNSSIVYSC) threads the bilayer. Residue His-251 participates in Zn(2+) binding.

Belongs to the peptidase M23B family. Zn(2+) serves as cofactor.

Its subcellular location is the cell membrane. This is an uncharacterized protein from Buchnera aphidicola subsp. Baizongia pistaciae (strain Bp).